We begin with the raw amino-acid sequence, 439 residues long: Trigger factor (439 aa).

Positions 158–233 constitute a PPIase FKBP-type domain; sequence GDVINIEYTI…IKEVLKRTLM (76 aa). Positions 410–439 are disordered; sequence KEISADEPVEEQKEEEEKEEAGSENSENKE. The segment covering 414–428 has biased composition (acidic residues); it reads ADEPVEEQKEEEEKE.

This sequence belongs to the FKBP-type PPIase family. Tig subfamily.

It is found in the cytoplasm. The enzyme catalyses [protein]-peptidylproline (omega=180) = [protein]-peptidylproline (omega=0). In terms of biological role, involved in protein export. Acts as a chaperone by maintaining the newly synthesized protein in an open conformation. Functions as a peptidyl-prolyl cis-trans isomerase. In Kosmotoga olearia (strain ATCC BAA-1733 / DSM 21960 / TBF 19.5.1), this protein is Trigger factor.